Consider the following 668-residue polypeptide: Biotin biosynthesis bifunctional protein BioWF (668 aa).

Residue Arg293 coordinates substrate. Residue 380–381 (GY) participates in pyridoxal 5'-phosphate binding. His405 is a binding site for substrate. Pyridoxal 5'-phosphate is bound by residues Ser451, 476 to 479 (DDAH), and 507 to 510 (TASK). N6-(pyridoxal phosphate)lysine is present on Lys510.

The protein in the N-terminal section; belongs to the BioW family. It in the C-terminal section; belongs to the class-II pyridoxal-phosphate-dependent aminotransferase family. BioF subfamily. In terms of assembly, homodimer. Mg(2+) serves as cofactor. The cofactor is pyridoxal 5'-phosphate.

The catalysed reaction is heptanedioate + ATP + CoA = 6-carboxyhexanoyl-CoA + AMP + diphosphate. The enzyme catalyses 6-carboxyhexanoyl-[ACP] + L-alanine + H(+) = (8S)-8-amino-7-oxononanoate + holo-[ACP] + CO2. The protein operates within metabolic intermediate metabolism; pimeloyl-CoA biosynthesis; pimeloyl-CoA from pimelate: step 1/1. It participates in cofactor biosynthesis; biotin biosynthesis. Its function is as follows. Catalyzes both the decarboxylative condensation of pimeloyl-[acyl-carrier protein] and L-alanine to produce 8-amino-7-oxononanoate (AON), [acyl-carrier protein], and carbon dioxide, and the transformation of pimelate into pimeloyl-CoA with concomitant hydrolysis of ATP to AMP. The polypeptide is Biotin biosynthesis bifunctional protein BioWF (Cutibacterium acnes (strain SK137) (Propionibacterium acnes)).